We begin with the raw amino-acid sequence, 277 residues long: Inositol monophosphatase 1 (277 aa).

Residues E70, D90, I92, and D93 each coordinate Mg(2+). Substrate is bound at residue E70. 92–95 (IDGT) contacts substrate. The residue at position 168 (T168) is a Phosphothreonine. Residues 194–196 (GTA), E213, and D220 each bind substrate. D220 is a Mg(2+) binding site.

The protein belongs to the inositol monophosphatase superfamily. In terms of assembly, homodimer. It depends on Mg(2+) as a cofactor. Post-translationally, the N-terminus is blocked.

The protein resides in the cytoplasm. The enzyme catalyses a myo-inositol phosphate + H2O = myo-inositol + phosphate. The catalysed reaction is 1D-myo-inositol 1-phosphate + H2O = myo-inositol + phosphate. It catalyses the reaction 1D-myo-inositol 2-phosphate + H2O = myo-inositol + phosphate. It carries out the reaction 1D-myo-inositol 3-phosphate + H2O = myo-inositol + phosphate. The enzyme catalyses 1D-myo-inositol 4-phosphate + H2O = myo-inositol + phosphate. The catalysed reaction is 1D-myo-inositol 5-phosphate + H2O = myo-inositol + phosphate. It catalyses the reaction 1D-myo-inositol 6-phosphate + H2O = myo-inositol + phosphate. It carries out the reaction scyllo-inositol 1-phosphate + H2O = scyllo-inositol + phosphate. The enzyme catalyses alpha-D-galactose 1-phosphate + H2O = D-galactose + phosphate. The catalysed reaction is alpha-D-glucose 1-phosphate + H2O = D-glucose + phosphate. It catalyses the reaction D-glucose 6-phosphate + H2O = D-glucose + phosphate. It carries out the reaction beta-D-fructose 1-phosphate + H2O = D-fructose + phosphate. The enzyme catalyses glycerol 2-phosphate + H2O = glycerol + phosphate. The catalysed reaction is adenosine 2'-phosphate + H2O = adenosine + phosphate. It functions in the pathway polyol metabolism; myo-inositol biosynthesis; myo-inositol from D-glucose 6-phosphate: step 2/2. With respect to regulation, activity with myo-inositol monophosphate and D-galactose 1-phosphate is inhibited by Li(+), Ca(2+) and Mn(2+), but also by Mg(2+) at concentrations above 3 mM. Phosphatase involved in the dephosphorylation of myo-inositol monophosphate to generate myo-inositol. Is also able to dephosphorylate scyllo-inositol-phosphate, myo-inositol 1,4-diphosphate, scyllo-inositol-1,3-diphosphate and scyllo-inositol-1,4-diphosphate. Also dephosphorylates in vitro other sugar-phosphates including D-galactose-1-phosphate, glucose-1-phosphate, glucose-6-phosphate, fructose-1-phosphate, beta-glycerophosphate and 2'-AMP. Responsible for the provision of inositol required for synthesis of phosphatidylinositol and polyphosphoinositides, and involved in maintaining normal brain function. Has been implicated as the pharmacological target for lithium Li(+) action in brain. Is equally active with myo-inositol monophosphate and D-galactose 1-phosphate. The protein is Inositol monophosphatase 1 (IMPA1) of Bos taurus (Bovine).